Reading from the N-terminus, the 63-residue chain is MPQEFEQIRSADQPLDSEESAPVAGARTDDTVDALDAVLDDIESVLETNAEEYVGSFVQKGGE.

The disordered stretch occupies residues 1–28 (MPQEFEQIRSADQPLDSEESAPVAGART). An ARC ATPase binding region spans residues 19–57 (ESAPVAGARTDDTVDALDAVLDDIESVLETNAEEYVGSF). Glutamate 63 is covalently cross-linked (Isoglutamyl lysine isopeptide (Glu-Lys) (interchain with K-? in acceptor proteins)).

This sequence belongs to the prokaryotic ubiquitin-like protein family. In terms of assembly, strongly interacts with the proteasome-associated ATPase ARC through a hydrophobic interface; the interacting region of Pup lies in its C-terminal half. There is one Pup binding site per ARC hexamer ring.

The protein operates within protein degradation; proteasomal Pup-dependent pathway. In terms of biological role, protein modifier that is covalently attached to lysine residues of substrate proteins, thereby targeting them for proteasomal degradation. The tagging system is termed pupylation. The chain is Prokaryotic ubiquitin-like protein Pup from Bifidobacterium dentium (strain ATCC 27534 / DSM 20436 / JCM 1195 / Bd1).